The following is a 213-amino-acid chain: NADH-quinone oxidoreductase subunit C (213 aa).

Belongs to the complex I 30 kDa subunit family. In terms of assembly, NDH-1 is composed of 15 different subunits. Subunits NuoB, C, D, E, F, and G constitute the peripheral sector of the complex.

The protein localises to the cell membrane. It catalyses the reaction a quinone + NADH + 5 H(+)(in) = a quinol + NAD(+) + 4 H(+)(out). Functionally, NDH-1 shuttles electrons from NADH, via FMN and iron-sulfur (Fe-S) centers, to quinones in the respiratory chain. The immediate electron acceptor for the enzyme in this species is believed to be a menaquinone. Couples the redox reaction to proton translocation (for every two electrons transferred, four hydrogen ions are translocated across the cytoplasmic membrane), and thus conserves the redox energy in a proton gradient. The chain is NADH-quinone oxidoreductase subunit C from Deinococcus geothermalis (strain DSM 11300 / CIP 105573 / AG-3a).